The primary structure comprises 309 residues: Acetylglutamate kinase (309 aa).

Residues 69-70 (GG), Arg91, and Asn194 contribute to the substrate site.

This sequence belongs to the acetylglutamate kinase family. ArgB subfamily.

The protein localises to the cytoplasm. It catalyses the reaction N-acetyl-L-glutamate + ATP = N-acetyl-L-glutamyl 5-phosphate + ADP. The protein operates within amino-acid biosynthesis; L-arginine biosynthesis; N(2)-acetyl-L-ornithine from L-glutamate: step 2/4. Catalyzes the ATP-dependent phosphorylation of N-acetyl-L-glutamate. This is Acetylglutamate kinase from Vesicomyosocius okutanii subsp. Calyptogena okutanii (strain HA).